A 458-amino-acid chain; its full sequence is L-hydantoinase (458 aa).

Positions 60, 62, 147, 183, 239, and 312 each coordinate Zn(2+). Lys-147 bears the N6-carboxylysine mark.

In terms of assembly, homotetramer. Zn(2+) serves as cofactor. In terms of processing, carboxylation allows a single lysine to coordinate two zinc ions.

Its function is as follows. Rather more predominant for the cleavage of aryl- than for alkyl-hydantoin derivatives. The stereoselectivity of this enzyme depends on the substrate used for bioconversion: strictly L-selective for the cleavage of D,L-5-indolylmethylhydantoin, but D-selective for the hydrolysis of D,L-methylthioethylhydantoin. The protein is L-hydantoinase (lhyD) of Paenarthrobacter aurescens (Arthrobacter aurescens).